Here is a 237-residue protein sequence, read N- to C-terminus: MKPSVVMIEPNGHFCSDCAIRTSAVCSSLDAAELREFEHLGRRVHFSSGETVFSEEDITTSFYNVLEGVMRLYKLLPDGRRQIVGFALPGDFLGMNLSGRHNFSADAIGAVTVCQFAKAPFGRFIEERPQLLRRINELAIRELSQARDHMVLLGRRSADEKVAAFLLGWRERLLALKGASDTVPLPMSRQDIADYLGLTIETVSRTFTKLERHGAIAIIHGGISLLDPARVEALAAA.

Residues 156-229 (RSADEKVAAF…HGGISLLDPA (74 aa)) enclose the HTH crp-type domain. The segment at residues 189-208 (RQDIADYLGLTIETVSRTFT) is a DNA-binding region (H-T-H motif).

B.japonicum has two FixLJ-dependent FixK homologs that are activators of the transcription of a group of genes involved in anaerobic processes such as denitrification and possibly nitrogen fixation. FixK may bind DNA at the FNR consensus binding site. This Bradyrhizobium diazoefficiens (strain JCM 10833 / BCRC 13528 / IAM 13628 / NBRC 14792 / USDA 110) protein is Nitrogen fixation regulation protein FixK (fixK).